Consider the following 237-residue polypeptide: Phosphoribosylaminoimidazole-succinocarboxamide synthase (237 aa).

It belongs to the SAICAR synthetase family.

It carries out the reaction 5-amino-1-(5-phospho-D-ribosyl)imidazole-4-carboxylate + L-aspartate + ATP = (2S)-2-[5-amino-1-(5-phospho-beta-D-ribosyl)imidazole-4-carboxamido]succinate + ADP + phosphate + 2 H(+). The protein operates within purine metabolism; IMP biosynthesis via de novo pathway; 5-amino-1-(5-phospho-D-ribosyl)imidazole-4-carboxamide from 5-amino-1-(5-phospho-D-ribosyl)imidazole-4-carboxylate: step 1/2. The polypeptide is Phosphoribosylaminoimidazole-succinocarboxamide synthase (Yersinia pseudotuberculosis serotype O:1b (strain IP 31758)).